The sequence spans 160 residues: SsrA-binding protein (160 aa).

It belongs to the SmpB family.

Its subcellular location is the cytoplasm. In terms of biological role, required for rescue of stalled ribosomes mediated by trans-translation. Binds to transfer-messenger RNA (tmRNA), required for stable association of tmRNA with ribosomes. tmRNA and SmpB together mimic tRNA shape, replacing the anticodon stem-loop with SmpB. tmRNA is encoded by the ssrA gene; the 2 termini fold to resemble tRNA(Ala) and it encodes a 'tag peptide', a short internal open reading frame. During trans-translation Ala-aminoacylated tmRNA acts like a tRNA, entering the A-site of stalled ribosomes, displacing the stalled mRNA. The ribosome then switches to translate the ORF on the tmRNA; the nascent peptide is terminated with the 'tag peptide' encoded by the tmRNA and targeted for degradation. The ribosome is freed to recommence translation, which seems to be the essential function of trans-translation. The chain is SsrA-binding protein from Mycobacterium leprae (strain Br4923).